The chain runs to 490 residues: Serine/threonine-protein kinase PBL35 (490 aa).

2 disordered regions span residues 1-39 (MGFD…RNSE) and 80-103 (SAIV…SNAE). A coiled-coil region spans residues 14–39 (SKTSNENEKKKKKRRRKKNNNVRNSE). Basic residues predominate over residues 23–33 (KKKKRRRKKNN). The span at 94-103 (SSTTTTSNAE) shows a compositional bias: low complexity. The Protein kinase domain occupies 136-422 (FRPESLLGEG…VEVLKPLPHL (287 aa)). Residues 142–150 (LGEGGFGCV) and Lys174 each bind ATP. Tyr219 bears the Phosphotyrosine mark. Asp269 (proton acceptor) is an active-site residue. A phosphoserine mark is found at Ser273 and Ser303. 2 positions are modified to phosphothreonine: Thr304 and Thr309. Residue Tyr317 is modified to Phosphotyrosine. The segment at 442–490 (AGSGSGSGRGFGSRNGQPVFRTLSSPHGQAGSSPYRHQIPSPKPKGATT) is disordered. Residues 444–454 (SGSGSGRGFGS) are compositionally biased toward gly residues. Over residues 463 to 473 (TLSSPHGQAGS) the composition is skewed to polar residues.

It belongs to the protein kinase superfamily. Ser/Thr protein kinase family. Interacts with SD129. In terms of processing, phosphorylated by SD129 in response to the pathogen-associated molecular pattern (PAMP) 3-OH-C10:0, a medium-chain 3-hydroxy fatty acid.

Its subcellular location is the cell membrane. The enzyme catalyses L-seryl-[protein] + ATP = O-phospho-L-seryl-[protein] + ADP + H(+). It carries out the reaction L-threonyl-[protein] + ATP = O-phospho-L-threonyl-[protein] + ADP + H(+). Its function is as follows. Involved in chitin-triggered immune signaling and is required for reactive oxygen species (ROS) production. Acts downstream of SD129 in defense signaling triggered by the pathogen-associated molecular pattern (PAMP) 3-OH-C10:0, a medium-chain 3-hydroxy fatty acid. The chain is Serine/threonine-protein kinase PBL35 from Arabidopsis thaliana (Mouse-ear cress).